Consider the following 201-residue polypeptide: MAHQNEQRGGGDRGRGRGRGRDRDQERDDELVDKLVHINRVAKTVKGGRNFQFAALVVVGDTKGRVGFGQGKAREVPEAIRKATDEAKKNMIRVPLREGRTLHHDGKGRHGAGKVVLRAAPPGTGVIAGGPMRAVLETLGIQDVVAKSVGTSNPYNMIRATMDALKLQSSPRSVAAKRGLKVGDLVNRRDDGASSPEAIEA.

The tract at residues Met-1 to Asp-28 is disordered. One can recognise an S5 DRBM domain in the interval Leu-31–Val-94. The interval Ser-173–Ala-201 is disordered.

This sequence belongs to the universal ribosomal protein uS5 family. As to quaternary structure, part of the 30S ribosomal subunit. Contacts proteins S4 and S8.

Functionally, with S4 and S12 plays an important role in translational accuracy. In terms of biological role, located at the back of the 30S subunit body where it stabilizes the conformation of the head with respect to the body. This chain is Small ribosomal subunit protein uS5, found in Maricaulis maris (strain MCS10) (Caulobacter maris).